A 48-amino-acid chain; its full sequence is uncharacterized protein (48 aa).

Residues M1–S30 are disordered.

This is an uncharacterized protein from Bacillus subtilis (strain 168).